An 88-amino-acid chain; its full sequence is Beta-insect excitatory toxin BmKIT1 (88 aa).

The first 18 residues, 1–18 (MKFFLIFLVIFPIMGVLG), serve as a signal peptide directing secretion. The LCN-type CS-alpha/beta domain maps to 20–83 (KNGYAVDSSG…IKDATKSYCD (64 aa)). Intrachain disulfides connect cysteine 34–cysteine 55, cysteine 40–cysteine 60, cysteine 44–cysteine 62, and cysteine 56–cysteine 82. An Isoleucine amide modification is found at isoleucine 87.

It belongs to the long (4 C-C) scorpion toxin superfamily. Sodium channel inhibitor family. Beta subfamily. As to expression, expressed by the venom gland.

The protein localises to the secreted. Functionally, excitatory insect beta-toxins induce a spastic paralysis. They bind voltage-independently at site-4 of sodium channels (Nav) and shift the voltage of activation toward more negative potentials thereby affecting sodium channel activation and promoting spontaneous and repetitive firing. This toxin is active only on insects. In Olivierus martensii (Manchurian scorpion), this protein is Beta-insect excitatory toxin BmKIT1.